We begin with the raw amino-acid sequence, 131 residues long: RutC family protein YjgH (131 aa).

Belongs to the RutC family.

This chain is RutC family protein YjgH (yjgH), found in Escherichia coli (strain K12).